Reading from the N-terminus, the 114-residue chain is BolA-like protein DDB_G0274169 (114 aa).

The segment covering Thr-88–Ile-98 has biased composition (polar residues). The disordered stretch occupies residues Thr-88–Lys-114.

Belongs to the BolA/IbaG family.

The protein is BolA-like protein DDB_G0274169 of Dictyostelium discoideum (Social amoeba).